Here is a 216-residue protein sequence, read N- to C-terminus: Vesicle-associated membrane protein 7A (216 aa).

The Cytoplasmic segment spans residues Met-1–Lys-189. Residues Ile-6–Leu-112 enclose the Longin domain. One can recognise a v-SNARE coiled-coil homology domain in the interval Lys-126–Gln-186. A helical; Anchor for type IV membrane protein membrane pass occupies residues Leu-190–Leu-210. The Vesicular portion of the chain corresponds to Lys-211 to Ile-216.

The protein belongs to the synaptobrevin family. As to quaternary structure, component of the SNARE complex composed of syn7A, syn8A, vamp7A and vti1A.

The protein localises to the cytoplasmic vesicle. Its subcellular location is the secretory vesicle membrane. It is found in the golgi apparatus. The protein resides in the trans-Golgi network membrane. It localises to the late endosome membrane. The protein localises to the lysosome membrane. Its subcellular location is the endoplasmic reticulum membrane. It is found in the phagosome membrane. In terms of biological role, involved in the targeting and/or fusion of transport vesicles to their target membrane during transport of proteins from the early endosome to the lysosome. Required for heterotypic fusion of late endosomes with lysosomes and homotypic lysosomal fusion. Required for calcium regulated lysosomal exocytosis. In Dictyostelium discoideum (Social amoeba), this protein is Vesicle-associated membrane protein 7A.